The primary structure comprises 112 residues: Protein AV2 (112 aa).

Belongs to the geminiviridae protein AV2/V2 family. As to quaternary structure, interacts with host SGS3.

It is found in the host cytoplasm. It localises to the host perinuclear region. Through its interaction with host SGS3, acts as a suppressor of RNA-mediated gene silencing, also known as post-transcriptional gene silencing (PTGS), a mechanism of plant viral defense that limits the accumulation of viral RNAs. This is Protein AV2 from Indian cassava mosaic virus (ICMV).